Reading from the N-terminus, the 273-residue chain is Proteasome subunit beta type-10 (273 aa).

An N-acetylmethionine modification is found at methionine 1. The propeptide at methionine 1–glycine 39 is removed in mature form. Threonine 40 acts as the Nucleophile in catalysis. Serine 230 bears the Phosphoserine mark.

This sequence belongs to the peptidase T1B family. In terms of assembly, the 26S proteasome consists of a 20S proteasome core and two 19S regulatory subunits. The 20S proteasome core is composed of 28 subunits that are arranged in four stacked rings, resulting in a barrel-shaped structure. The two end rings are each formed by seven alpha subunits, and the two central rings are each formed by seven beta subunits. The catalytic chamber with the active sites is on the inside of the barrel. Component of the immunoproteasome, where it displaces the equivalent housekeeping subunit PSMB7. Component of the spermatoproteasome, a form of the proteasome specifically found in testis. As to quaternary structure, (Microbial infection) Interacts with HIV-1 TAT protein. Post-translationally, autocleaved. The resulting N-terminal Thr residue of the mature subunit is responsible for the nucleophile proteolytic activity.

The protein resides in the cytoplasm. The protein localises to the nucleus. It carries out the reaction Cleavage of peptide bonds with very broad specificity.. Its function is as follows. The proteasome is a multicatalytic proteinase complex which is characterized by its ability to cleave peptides with Arg, Phe, Tyr, Leu, and Glu adjacent to the leaving group at neutral or slightly basic pH. The proteasome has an ATP-dependent proteolytic activity. This subunit is involved in antigen processing to generate class I binding peptides. This Homo sapiens (Human) protein is Proteasome subunit beta type-10 (PSMB10).